A 372-amino-acid chain; its full sequence is Chaperone protein DnaJ (372 aa).

The region spanning 5–70 (DFYEVLGVTK…QKRAAYDRYG (66 aa)) is the J domain. The CR-type zinc-finger motif lies at 129–207 (GKLASLTLPT…CGGAGRVTRE (79 aa)). Zn(2+)-binding residues include cysteine 142, cysteine 145, cysteine 159, cysteine 162, cysteine 181, cysteine 184, cysteine 195, and cysteine 198. 4 CXXCXGXG motif repeats span residues 142-149 (CEACDGTG), 159-166 (CPTCGGQG), 181-188 (CPQCHGRG), and 195-202 (CQACGGAG).

This sequence belongs to the DnaJ family. As to quaternary structure, homodimer. Requires Zn(2+) as cofactor.

Its subcellular location is the cytoplasm. Functionally, participates actively in the response to hyperosmotic and heat shock by preventing the aggregation of stress-denatured proteins and by disaggregating proteins, also in an autonomous, DnaK-independent fashion. Unfolded proteins bind initially to DnaJ; upon interaction with the DnaJ-bound protein, DnaK hydrolyzes its bound ATP, resulting in the formation of a stable complex. GrpE releases ADP from DnaK; ATP binding to DnaK triggers the release of the substrate protein, thus completing the reaction cycle. Several rounds of ATP-dependent interactions between DnaJ, DnaK and GrpE are required for fully efficient folding. Also involved, together with DnaK and GrpE, in the DNA replication of plasmids through activation of initiation proteins. The polypeptide is Chaperone protein DnaJ (Beijerinckia indica subsp. indica (strain ATCC 9039 / DSM 1715 / NCIMB 8712)).